A 312-amino-acid polypeptide reads, in one-letter code: Malate dehydrogenase (312 aa).

Residues 7–13 and Asp-34 each bind NAD(+); that span reads GAAGGIG. Residues Arg-81 and Arg-87 each contribute to the substrate site. NAD(+) is bound by residues Asn-94 and 117–119; that span reads ITN. The substrate site is built by Asn-119 and Arg-153. His-177 serves as the catalytic Proton acceptor. Met-228 serves as a coordination point for NAD(+).

The protein belongs to the LDH/MDH superfamily. MDH type 1 family. In terms of assembly, homodimer.

It carries out the reaction (S)-malate + NAD(+) = oxaloacetate + NADH + H(+). Its function is as follows. Catalyzes the reversible oxidation of malate to oxaloacetate. The chain is Malate dehydrogenase from Mannheimia succiniciproducens (strain KCTC 0769BP / MBEL55E).